The primary structure comprises 341 residues: Tryptophan--tRNA ligase (341 aa).

Residues 11-13 (RPT) and 19-20 (GH) contribute to the ATP site. The 'HIGH' region signature appears at 12–20 (PTGKLHIGH). Asp140 is a binding site for L-tryptophan. ATP is bound by residues 152–154 (GND), Leu194, and 202–206 (KMSKS). The 'KMSKS' region signature appears at 202-206 (KMSKS).

Belongs to the class-I aminoacyl-tRNA synthetase family. Homodimer.

The protein localises to the cytoplasm. The catalysed reaction is tRNA(Trp) + L-tryptophan + ATP = L-tryptophyl-tRNA(Trp) + AMP + diphosphate + H(+). In terms of biological role, catalyzes the attachment of tryptophan to tRNA(Trp). This is Tryptophan--tRNA ligase from Lactococcus lactis subsp. lactis (strain IL1403) (Streptococcus lactis).